The following is a 200-amino-acid chain: Small ribosomal subunit protein uS4 (200 aa).

A disordered region spans residues 22–42 (TGKELEKRPYAPGPHGPNQRK). The S4 RNA-binding domain maps to 92 to 152 (ARLDNLVYRM…EKSRNLAVIK (61 aa)).

This sequence belongs to the universal ribosomal protein uS4 family. As to quaternary structure, part of the 30S ribosomal subunit. Contacts protein S5. The interaction surface between S4 and S5 is involved in control of translational fidelity.

Its function is as follows. One of the primary rRNA binding proteins, it binds directly to 16S rRNA where it nucleates assembly of the body of the 30S subunit. With S5 and S12 plays an important role in translational accuracy. The polypeptide is Small ribosomal subunit protein uS4 (Bacillus cytotoxicus (strain DSM 22905 / CIP 110041 / 391-98 / NVH 391-98)).